The sequence spans 209 residues: Putative cardiolipin synthase (209 aa).

A run of 4 helical transmembrane segments spans residues 27–47 (AFVY…ILVF), 82–102 (VTVP…VLTL), 126–146 (VTYV…TILL), and 157–177 (LLAC…WAFV).

It belongs to the CDP-alcohol phosphatidyltransferase class-I family.

It localises to the cell membrane. It carries out the reaction a CDP-1,2-diacyl-sn-glycerol + a 1,2-diacyl-sn-glycero-3-phospho-(1'-sn-glycerol) = a cardiolipin + CMP + H(+). The protein operates within lipid metabolism; phospholipid metabolism. Its function is as follows. May catalyze the biosynthesis of cardiolipin from phosphatidylglycerol (PG) and CDP-diacylglycerol. The protein is Putative cardiolipin synthase of Mycobacterium bovis (strain ATCC BAA-935 / AF2122/97).